Here is a 123-residue protein sequence, read N- to C-terminus: Putative oocyte-secreted protein 1 homolog (123 aa).

The first 26 residues, 1–26 (MKTILGFKGLFYLHSLIWTCAGDWSA), serve as a signal peptide directing secretion.

This sequence belongs to the PLAC1 family.

Its subcellular location is the secreted. In terms of biological role, may be involved in cell differentiation. In Homo sapiens (Human), this protein is Putative oocyte-secreted protein 1 homolog (OOSP1).